Here is a 571-residue protein sequence, read N- to C-terminus: External alternative NAD(P)H-ubiquinone oxidoreductase B1, mitochondrial (571 aa).

A mitochondrion-targeting transit peptide spans 1-35 (MTLLSSLGRASRSAPLASKLLLLGTLSGGSIVAYA). Residue 51–81 (KVVVLGTGWAGISFLKDLDITSYDVQVVSPQ) coordinates FAD. Residue 215–251 (LHFVIVGGGPTGVEFAAELHDFIIEDITKIYPSVKEL) coordinates NAD(+). One can recognise an EF-hand domain in the interval 372–407 (KILGDIANIFKAADADNSGTLTMEELEGVVDDIIVR). Residues Asp-385, Asp-387, Ser-389, Thr-391, and Glu-396 each contribute to the Ca(2+) site. The short motif at 562 to 571 (YIFGRDSSRI) is the Microbody targeting signal element.

This sequence belongs to the NADH dehydrogenase family. FAD is required as a cofactor. As to expression, expressed in seedlings, roots, cotyledons, leaves, stems, buds and flowers.

Its subcellular location is the mitochondrion inner membrane. The protein localises to the peroxisome. It catalyses the reaction a quinone + NADH + H(+) = a quinol + NAD(+). It carries out the reaction a ubiquinone + NADH + H(+) = a ubiquinol + NAD(+). Its activity is regulated as follows. Activity is calcium-dependent with a more pronounced effect at higher pH. Its function is as follows. Alternative NADH-ubiquinone oxidoreductase which catalyzes the oxidation of mitochondrial NADH does not translocate protons across the inner mitochondrial membrane. Calcium-dependent NAD(P)H dehydrogenase. Binds calcium ions. This Arabidopsis thaliana (Mouse-ear cress) protein is External alternative NAD(P)H-ubiquinone oxidoreductase B1, mitochondrial (NDB1).